A 323-amino-acid polypeptide reads, in one-letter code: tRNA U34 carboxymethyltransferase (323 aa).

Carboxy-S-adenosyl-L-methionine contacts are provided by residues Lys91, Trp105, Lys110, Gly130, 152–154, 181–182, Met196, Tyr200, and Arg315; these read DPS and IE.

This sequence belongs to the class I-like SAM-binding methyltransferase superfamily. CmoB family. As to quaternary structure, homotetramer.

The enzyme catalyses carboxy-S-adenosyl-L-methionine + 5-hydroxyuridine(34) in tRNA = 5-carboxymethoxyuridine(34) in tRNA + S-adenosyl-L-homocysteine + H(+). In terms of biological role, catalyzes carboxymethyl transfer from carboxy-S-adenosyl-L-methionine (Cx-SAM) to 5-hydroxyuridine (ho5U) to form 5-carboxymethoxyuridine (cmo5U) at position 34 in tRNAs. This chain is tRNA U34 carboxymethyltransferase, found in Vibrio campbellii (strain ATCC BAA-1116).